Consider the following 117-residue polypeptide: Ribosome-binding factor A (117 aa).

Belongs to the RbfA family. As to quaternary structure, monomer. Binds 30S ribosomal subunits, but not 50S ribosomal subunits or 70S ribosomes.

The protein localises to the cytoplasm. Functionally, one of several proteins that assist in the late maturation steps of the functional core of the 30S ribosomal subunit. Associates with free 30S ribosomal subunits (but not with 30S subunits that are part of 70S ribosomes or polysomes). Required for efficient processing of 16S rRNA. May interact with the 5'-terminal helix region of 16S rRNA. This Nitrosomonas europaea (strain ATCC 19718 / CIP 103999 / KCTC 2705 / NBRC 14298) protein is Ribosome-binding factor A.